A 132-amino-acid chain; its full sequence is Small ribosomal subunit protein uS8 (132 aa).

The protein belongs to the universal ribosomal protein uS8 family. In terms of assembly, part of the 30S ribosomal subunit. Contacts proteins S5 and S12.

Functionally, one of the primary rRNA binding proteins, it binds directly to 16S rRNA central domain where it helps coordinate assembly of the platform of the 30S subunit. The protein is Small ribosomal subunit protein uS8 of Macrococcus caseolyticus (strain JCSC5402) (Macrococcoides caseolyticum).